The chain runs to 438 residues: uncharacterized protein (438 aa).

The FAD-binding PCMH-type domain occupies 23–193 (IHAKPPVVVV…VNATIRLTAA (171 aa)). FAD is bound by residues 55–59 (VRGSG), 60–61 (HS), Gln65, Asp117, Thr122, 128–132 (SVGGF), Ile183, Tyr393, and 430–433 (APGY). Residue His60 is modified to Pros-8alpha-FAD histidine.

The protein belongs to the oxygen-dependent FAD-linked oxidoreductase family. It depends on FAD as a cofactor.

In terms of biological role, the FAS-operon encodes genes involved in cytokinin production and in host plant fasciation (leafy gall). This is an uncharacterized protein from Rhodococcoides fascians (Rhodococcus fascians).